The primary structure comprises 582 residues: Histone deacetylase 9-B (582 aa).

Residues 146–195 are interaction with mef2; the sequence is SNEVKQKLQEFLLSKSTKDITLNGIPQKITQSSKLWYTASHHTSLEQSSP. The segment covering 189-205 has biased composition (polar residues); sequence SLEQSSPPLGGASSSCK. Disordered regions lie at residues 189–254, 270–314, 409–447, and 496–567; these read SLEQ…KEGN, TASS…QSRL, LSSGQSPVHPPSPLAMMENSPSSTRPKLPRHRPLNRTQS, and VHLQ…NQSS. 2 stretches are compositionally biased toward basic and acidic residues: residues 213–224 and 238–253; these read DYRDDFPLRKTV and KVAERRSSPLLRRKEG. Positions 270-289 are enriched in low complexity; sequence TASSSAPGSGPSSPNGACSA. Positions 295-314 are enriched in polar residues; the sequence is GPSSLPVTTRTERWPSQSRL.

Belongs to the histone deacetylase family. HD type 2 subfamily. As to quaternary structure, homodimer. Interacts with mef2.

It localises to the nucleus. The catalysed reaction is N(6)-acetyl-L-lysyl-[histone] + H2O = L-lysyl-[histone] + acetate. Its function is as follows. Devoided of intrinsic deacetylase activity, promotes the deacetylation of lysine residues on the N-terminal part of the core histones (H2A, H2B, H3 and H4) by recruiting other histone deacetylases. Histone deacetylation gives a tag for epigenetic repression and plays an important role in transcriptional regulation, cell cycle progression and developmental events. Represses MEF2-dependent transcription. This chain is Histone deacetylase 9-B (hdac9b), found in Danio rerio (Zebrafish).